We begin with the raw amino-acid sequence, 95 residues long: MPKLEMMLLVLLILPLPYFDAAGGQSVHVDGYGDGLARYLQRGERAVKKTCIRSTPGSNWGRCCLTKMCHTLCCARSDCTCVYRSGKGHGCSCTS.

The first 24 residues, 1-24 (MPKLEMMLLVLLILPLPYFDAAGG), serve as a signal peptide directing secretion. The propeptide occupies 25 to 45 (QSVHVDGYGDGLARYLQRGER). Residue Pro-56 is modified to 4-hydroxyproline. Cystine bridges form between Cys-64–Cys-73, Cys-69–Cys-81, Cys-74–Cys-91, and Cys-79–Cys-93.

This sequence belongs to the conotoxin D superfamily. Homodimer; disulfide-linked. In terms of processing, the homodimer contains 10 disulfide bonds. As to expression, expressed by the venom duct.

Its subcellular location is the secreted. Alpha-conotoxins act on postsynaptic membranes, they bind to the nicotinic acetylcholine receptors (nAChR) and thus inhibit them. Through its two C-terminal domains, this homodimeric protein would bind to two nAChR allosteric sites, located outside the nAChR C-loop of the principal binding face and at the adjacent binding interface in a clockwise direction. This toxin slowly and reversibly inhibits the ACh-induced response of the human alpha-7/CHRNA7 nAChR subtype (IC(50)=6.2 uM). This Conus princeps (Prince cone) protein is Alpha-conotoxin PiXXA.